The sequence spans 30 residues: SCSGRDSRCPPVCCMGLMCSRGKCVSIYGE.

Intrachain disulfides connect Cys-2–Cys-14, Cys-9–Cys-19, and Cys-13–Cys-24. Residues Pro-10 and Pro-11 each carry the 4-hydroxyproline modification.

Post-translationally, three different forms of TVIIA exist. Pro-10 and Pro-11 of conotoxin TVIIA are hydroxylated in TVIIA, whereas Pro-10 is not hydroxylated in [Pro10]TVIIA and neither Pro-10 nor Pro-11 are hydroxylated in [Pro10,11]TVIIA. As to expression, expressed by the venom duct.

The protein resides in the secreted. By structural similarity with conotoxin GS, may inhibit the sodium channel (Nav). No effect was observed upon intracranial injections into mice and intraperitoneal injections into goldfish (25 ug). The protein is Conotoxin TVIIA of Conus tulipa (Fish-hunting cone snail).